The following is a 473-amino-acid chain: Ribulose bisphosphate carboxylase large chain (473 aa).

Residues N116 and T166 each contribute to the substrate site. K168 acts as the Proton acceptor in catalysis. A substrate-binding site is contributed by K170. 3 residues coordinate Mg(2+): K194, D196, and E197. N6-carboxylysine is present on K194. Residue H287 is the Proton acceptor of the active site. Positions 288, 320, and 372 each coordinate substrate.

The protein belongs to the RuBisCO large chain family. Type I subfamily. As to quaternary structure, heterohexadecamer of 8 large chains and 8 small chains. Mg(2+) serves as cofactor.

It catalyses the reaction 2 (2R)-3-phosphoglycerate + 2 H(+) = D-ribulose 1,5-bisphosphate + CO2 + H2O. It carries out the reaction D-ribulose 1,5-bisphosphate + O2 = 2-phosphoglycolate + (2R)-3-phosphoglycerate + 2 H(+). In terms of biological role, ruBisCO catalyzes two reactions: the carboxylation of D-ribulose 1,5-bisphosphate, the primary event in carbon dioxide fixation, as well as the oxidative fragmentation of the pentose substrate. Both reactions occur simultaneously and in competition at the same active site. This chain is Ribulose bisphosphate carboxylase large chain, found in Alkalilimnicola ehrlichii (strain ATCC BAA-1101 / DSM 17681 / MLHE-1).